The chain runs to 82 residues: Immediate early response 3-interacting protein 1 (82 aa).

Transmembrane regions (helical) follow at residues 2-22 (AFTL…IAVL) and 62-82 (VMRV…LLFG).

It belongs to the YOS1 family.

It localises to the endoplasmic reticulum membrane. Its function is as follows. Regulator of endoplasmic reticulum secretion that acts as a key determinant of brain size. Required for secretion of extracellular matrix proteins. Required for correct brain development by depositing sufficient extracellular matrix proteins for tissue integrity and the proliferation of neural progenitors. Acts as a regulator of the unfolded protein response (UPR). The sequence is that of Immediate early response 3-interacting protein 1 from Danio rerio (Zebrafish).